Consider the following 59-residue polypeptide: Large ribosomal subunit protein bL32 (59 aa).

This sequence belongs to the bacterial ribosomal protein bL32 family.

This Lactiplantibacillus plantarum (strain ATCC BAA-793 / NCIMB 8826 / WCFS1) (Lactobacillus plantarum) protein is Large ribosomal subunit protein bL32.